The primary structure comprises 313 residues: Pyrimidine-specific ribonucleoside hydrolase RihB (313 aa).

The active-site Proton acceptor is the Asp11. 3 residues coordinate Ca(2+): Asp11, Asp16, and Val124. Substrate-binding residues include Gln227 and His239. Asp240 is a Ca(2+) binding site.

It belongs to the IUNH family. RihB subfamily. In terms of assembly, homotetramer. It depends on Ca(2+) as a cofactor.

It catalyses the reaction a pyrimidine ribonucleoside + H2O = a pyrimidine nucleobase + D-ribose. Functionally, hydrolyzes cytidine or uridine to ribose and cytosine or uracil, respectively. Has a clear preference for cytidine over uridine. Strictly specific for ribonucleosides. This Escherichia coli O17:K52:H18 (strain UMN026 / ExPEC) protein is Pyrimidine-specific ribonucleoside hydrolase RihB.